The primary structure comprises 155 residues: 6,7-dimethyl-8-ribityllumazine synthase (155 aa).

5-amino-6-(D-ribitylamino)uracil contacts are provided by residues Phe-24, Ala-58–Glu-60, and Val-82–Ile-84. Ser-87–Thr-88 is a (2S)-2-hydroxy-3-oxobutyl phosphate binding site. The active-site Proton donor is His-90. Phe-115 is a binding site for 5-amino-6-(D-ribitylamino)uracil. Arg-129 contacts (2S)-2-hydroxy-3-oxobutyl phosphate.

Belongs to the DMRL synthase family.

It carries out the reaction (2S)-2-hydroxy-3-oxobutyl phosphate + 5-amino-6-(D-ribitylamino)uracil = 6,7-dimethyl-8-(1-D-ribityl)lumazine + phosphate + 2 H2O + H(+). It functions in the pathway cofactor biosynthesis; riboflavin biosynthesis; riboflavin from 2-hydroxy-3-oxobutyl phosphate and 5-amino-6-(D-ribitylamino)uracil: step 1/2. Catalyzes the formation of 6,7-dimethyl-8-ribityllumazine by condensation of 5-amino-6-(D-ribitylamino)uracil with 3,4-dihydroxy-2-butanone 4-phosphate. This is the penultimate step in the biosynthesis of riboflavin. The polypeptide is 6,7-dimethyl-8-ribityllumazine synthase (Chlorobaculum tepidum (strain ATCC 49652 / DSM 12025 / NBRC 103806 / TLS) (Chlorobium tepidum)).